Consider the following 300-residue polypeptide: Porphobilinogen deaminase (300 aa).

Cysteine 243 is modified (S-(dipyrrolylmethanemethyl)cysteine).

Belongs to the HMBS family. In terms of assembly, monomer. Requires dipyrromethane as cofactor.

It carries out the reaction 4 porphobilinogen + H2O = hydroxymethylbilane + 4 NH4(+). Its pathway is porphyrin-containing compound metabolism; protoporphyrin-IX biosynthesis; coproporphyrinogen-III from 5-aminolevulinate: step 2/4. In terms of biological role, tetrapolymerization of the monopyrrole PBG into the hydroxymethylbilane pre-uroporphyrinogen in several discrete steps. The polypeptide is Porphobilinogen deaminase (Clostridium novyi (strain NT)).